A 1132-amino-acid chain; its full sequence is Tyrosine-protein kinase JAK2 (1132 aa).

Positions 1 to 239 (MGMACLTMTE…RYRFRRFIQQ (239 aa)) are interaction with cytokine/interferon/growth hormone receptors. The region spanning 37–380 (PVLQVYLYHS…GYYRLTADAH (344 aa)) is the FERM domain. At Tyr-119 the chain carries Phosphotyrosine; by autocatalysis. 2 positions are modified to phosphotyrosine: Tyr-372 and Tyr-373. The 82-residue stretch at 401–482 (HGPISMDFAI…SLKDLLNCYQ (82 aa)) folds into the SH2; atypical domain. Phosphoserine is present on Ser-523. The 265-residue stretch at 545-809 (LIFNESLGQG…AVIRDLNSLF (265 aa)) folds into the Protein kinase 1 domain. Tyr-570 and Tyr-813 each carry phosphotyrosine. Positions 849–1126 (LKFLQQLGKG…RDLSLRVDQI (278 aa)) constitute a Protein kinase 2 domain. 855 to 863 (LGKGNFGSV) is an ATP binding site. Position 868 is a phosphotyrosine; by autocatalysis (Tyr-868). Residue Lys-882 coordinates ATP. 2 positions are modified to phosphotyrosine; by autocatalysis: Tyr-966 and Tyr-972. Asp-976 acts as the Proton acceptor in catalysis. Phosphotyrosine; by autocatalysis is present on residues Tyr-1007 and Tyr-1008.

This sequence belongs to the protein kinase superfamily. Tyr protein kinase family. JAK subfamily. As to quaternary structure, interacts with IL23R, SKB1 and STAM2. Interacts with EPOR. Interacts with LYN. Interacts with SIRPA. Interacts with SH2B1. Interacts with TEC. Interacts with IFNGR2 (via intracellular domain). Interacts with LEPR (Isoform B). Interacts with HSP90AB1; promotes functional activation in a heat shock-dependent manner. Interacts with STRA6. Interacts with ASB2; the interaction targets JAK2 for Notch-induced proteasomal degradation. Mg(2+) is required as a cofactor. Post-translationally, autophosphorylated, leading to regulate its activity. Leptin promotes phosphorylation on tyrosine residues, including phosphorylation on Tyr-813. Autophosphorylation on Tyr-119 in response to EPO down-regulates its kinase activity. Autophosphorylation on Tyr-868, Tyr-966 and Tyr-972 in response to growth hormone (GH) are required for maximal kinase activity. Also phosphorylated by TEC. Phosphorylated on tyrosine residues in response to interferon gamma signaling. Phosphorylated on tyrosine residues in response to a signaling cascade that is activated by increased cellular retinol. Undergoes Notch-induced ubiquitination and subsequent proteasomal degradation which is mediated by ASB1 or ASB2, the substrate-recognition components of probable ECS E3 ubiquitin-protein ligase complexes. Ubiquitously expressed throughout most tissues.

It localises to the endomembrane system. Its subcellular location is the cytoplasm. It is found in the nucleus. It carries out the reaction L-tyrosyl-[protein] + ATP = O-phospho-L-tyrosyl-[protein] + ADP + H(+). With respect to regulation, regulated by autophosphorylation, can both activate or decrease activity. Heme regulates its activity by enhancing the phosphorylation on Tyr-1007 and Tyr-1008. Its function is as follows. Non-receptor tyrosine kinase involved in various processes such as cell growth, development, differentiation or histone modifications. Mediates essential signaling events in both innate and adaptive immunity. In the cytoplasm, plays a pivotal role in signal transduction via its association with type I receptors such as growth hormone (GHR), prolactin (PRLR), leptin (LEPR), erythropoietin (EPOR), thrombopoietin (THPO); or type II receptors including IFN-alpha, IFN-beta, IFN-gamma and multiple interleukins. Following ligand-binding to cell surface receptors, phosphorylates specific tyrosine residues on the cytoplasmic tails of the receptor, creating docking sites for STATs proteins. Subsequently, phosphorylates the STATs proteins once they are recruited to the receptor. Phosphorylated STATs then form homodimer or heterodimers and translocate to the nucleus to activate gene transcription. For example, cell stimulation with erythropoietin (EPO) during erythropoiesis leads to JAK2 autophosphorylation, activation, and its association with erythropoietin receptor (EPOR) that becomes phosphorylated in its cytoplasmic domain. Then, STAT5 (STAT5A or STAT5B) is recruited, phosphorylated and activated by JAK2. Once activated, dimerized STAT5 translocates into the nucleus and promotes the transcription of several essential genes involved in the modulation of erythropoiesis. Part of a signaling cascade that is activated by increased cellular retinol and that leads to the activation of STAT5 (STAT5A or STAT5B). In addition, JAK2 mediates angiotensin-2-induced ARHGEF1 phosphorylation. Plays a role in cell cycle by phosphorylating CDKN1B. Cooperates with TEC through reciprocal phosphorylation to mediate cytokine-driven activation of FOS transcription. In the nucleus, plays a key role in chromatin by specifically mediating phosphorylation of 'Tyr-41' of histone H3 (H3Y41ph), a specific tag that promotes exclusion of CBX5 (HP1 alpha) from chromatin. Up-regulates the potassium voltage-gated channel activity of KCNA3. The chain is Tyrosine-protein kinase JAK2 from Rattus norvegicus (Rat).